The primary structure comprises 566 residues: Phenylalanine--tRNA ligase beta subunit (566 aa).

The B5 domain occupies 287–362; it reads YFQEEVEFNV…IGEGLSSFNP (76 aa). Residues D340, D346, E349, and D350 each contribute to the Mg(2+) site.

Belongs to the phenylalanyl-tRNA synthetase beta subunit family. Type 2 subfamily. Tetramer of two alpha and two beta subunits. Requires Mg(2+) as cofactor.

It is found in the cytoplasm. The catalysed reaction is tRNA(Phe) + L-phenylalanine + ATP = L-phenylalanyl-tRNA(Phe) + AMP + diphosphate + H(+). This Borreliella burgdorferi (strain ATCC 35210 / DSM 4680 / CIP 102532 / B31) (Borrelia burgdorferi) protein is Phenylalanine--tRNA ligase beta subunit.